A 231-amino-acid polypeptide reads, in one-letter code: Orotidine 5'-phosphate decarboxylase (231 aa).

Residues aspartate 11, lysine 33, 60–69 (DLKFHDIPNT), threonine 120, arginine 181, glutamine 190, glycine 210, and arginine 211 each bind substrate. Lysine 62 functions as the Proton donor in the catalytic mechanism.

It belongs to the OMP decarboxylase family. Type 1 subfamily. Homodimer.

It carries out the reaction orotidine 5'-phosphate + H(+) = UMP + CO2. The protein operates within pyrimidine metabolism; UMP biosynthesis via de novo pathway; UMP from orotate: step 2/2. Catalyzes the decarboxylation of orotidine 5'-monophosphate (OMP) to uridine 5'-monophosphate (UMP). This Colwellia psychrerythraea (strain 34H / ATCC BAA-681) (Vibrio psychroerythus) protein is Orotidine 5'-phosphate decarboxylase.